The following is an 899-amino-acid chain: Nuclear factor NF-kappa-B p100 subunit (899 aa).

Residues Ser-23 and Ser-161 each carry the phosphoserine modification. In terms of domain architecture, RHD spans 35–224; sequence ADGPYLVIVE…QPIHDSKSPG (190 aa). Positions 337–341 match the Nuclear localization signal motif; it reads RKRRK. Positions 346 to 377 are GRR; it reads FSQPFGGGSHMGGGSGGSAGGYGGAGGGGSLG. The interval 403–434 is disordered; sequence GGAQMAGSRRDTDAGEGAEEPRTPPEAPQGEP. Residues 410-425 are compositionally biased toward basic and acidic residues; the sequence is SRRDTDAGEGAEEPRT. Thr-425 is modified (phosphothreonine). ANK repeat units lie at residues 487 to 516, 526 to 555, 559 to 590, 599 to 628, 633 to 663, and 667 to 696; these read NGDTPLHLAIIHGQTGVIEQIAHVIYHAQY, LHQTPLHLAVITGQTRVVSFLLQVGADPTL, HGDSALHLALRAGAAAPELLQALLRSGAHAVP, EGLYPVHLAVHARSPECLDLLVDCGAEVEA, GGRTALHLATEMEELGLVTHLVTKLHANVNA, and AGNTPLHLAAGLGSPTLTRLLLKAGADIHA. The interval 698–734 is disordered; the sequence is NEEPLCPLPSPSTSGSDSDSEGPERDTQRNFRGHTPL. A phosphoserine mark is found at Ser-713, Ser-715, and Ser-717. Residues 729–755 form an ANK 7 repeat; that stretch reads RGHTPLDLTCSTKVKTLLLNAAQNTTE. The Death domain occupies 764 to 851; that stretch reads AGPGLSLGDA…EGVRLLKGPE (88 aa). Phosphoserine is present on Ser-812. Basic and acidic residues predominate over residues 851-865; that stretch reads ETRDKLPSTEVKEDS. The interval 851–899 is disordered; it reads ETRDKLPSTEVKEDSAYGSQSVEQEAEKLCPPPEPPGGLCHGHPQPQVH. Lys-855 participates in a covalent cross-link: Glycyl lysine isopeptide (Lys-Gly) (interchain with G-Cter in ubiquitin). Phosphoserine; by MAP3K14 occurs at positions 865 and 869. The span at 887 to 899 shows a compositional bias: low complexity; it reads GGLCHGHPQPQVH.

As to quaternary structure, component of the NF-kappa-B RelB-p52 complex. Homodimer; component of the NF-kappa-B p52-p52 complex. Component of the NF-kappa-B p65-p52 complex. Component of the NF-kappa-B p52-c-Rel complex. NFKB2/p52 interacts with NFKBIE. Component of a complex consisting of the NF-kappa-B p50-p50 homodimer and BCL3. Directly interacts with MEN1. While translation occurs, the particular unfolded structure after the GRR repeat promotes the generation of p52 making it an acceptable substrate for the proteasome. This process is known as cotranslational processing. The processed form is active and the unprocessed form acts as an inhibitor (I kappa B-like), being able to form cytosolic complexes with NF-kappa B, trapping it in the cytoplasm. Complete folding of the region downstream of the GRR repeat precludes processing. Post-translationally, subsequent to MAP3K14-dependent serine phosphorylation, p100 polyubiquitination occurs then triggering its proteasome-dependent processing. In terms of processing, constitutive processing is tightly suppressed by its C-terminal processing inhibitory domain, named PID, which contains the death domain. Ubiquitinated by TRIM55; leading to processing by VCP and subsequent ubiquitin-dependent protein degradation by the proteasome. As to expression, highly expressed in lymph nodes and thymus.

The protein resides in the nucleus. It is found in the cytoplasm. NF-kappa-B is a pleiotropic transcription factor present in almost all cell types and is the endpoint of a series of signal transduction events that are initiated by a vast array of stimuli related to many biological processes such as inflammation, immunity, differentiation, cell growth, tumorigenesis and apoptosis. NF-kappa-B is a homo- or heterodimeric complex formed by the Rel-like domain-containing proteins RELA/p65, RELB, NFKB1/p105, NFKB1/p50, REL and NFKB2/p52. The dimers bind at kappa-B sites in the DNA of their target genes and the individual dimers have distinct preferences for different kappa-B sites that they can bind with distinguishable affinity and specificity. Different dimer combinations act as transcriptional activators or repressors, respectively. NF-kappa-B is controlled by various mechanisms of post-translational modification and subcellular compartmentalization as well as by interactions with other cofactors or corepressors. NF-kappa-B complexes are held in the cytoplasm in an inactive state complexed with members of the NF-kappa-B inhibitor (I-kappa-B) family. In a conventional activation pathway, I-kappa-B is phosphorylated by I-kappa-B kinases (IKKs) in response to different activators, subsequently degraded thus liberating the active NF-kappa-B complex which translocates to the nucleus. In a non-canonical activation pathway, the MAP3K14-activated CHUK/IKKA homodimer phosphorylates NFKB2/p100 associated with RelB, inducing its proteolytic processing to NFKB2/p52 and the formation of NF-kappa-B RelB-p52 complexes. The NF-kappa-B heterodimeric RelB-p52 complex is a transcriptional activator. The NF-kappa-B p52-p52 homodimer is a transcriptional repressor. NFKB2 appears to have dual functions such as cytoplasmic retention of attached NF-kappa-B proteins by p100 and generation of p52 by a cotranslational processing. The proteasome-mediated process ensures the production of both p52 and p100 and preserves their independent function. p52 binds to the kappa-B consensus sequence 5'-GGRNNYYCC-3', located in the enhancer region of genes involved in immune response and acute phase reactions. p52 and p100 are respectively the minor and major form; the processing of p100 being relatively poor. Isoform p49 is a subunit of the NF-kappa-B protein complex, which stimulates the HIV enhancer in synergy with p65. In concert with RELB, regulates the circadian clock by repressing the transcriptional activator activity of the CLOCK-BMAL1 heterodimer. This is Nuclear factor NF-kappa-B p100 subunit (Nfkb2) from Mus musculus (Mouse).